The chain runs to 317 residues: Glycerol-3-phosphate dehydrogenase [NAD(P)+] (317 aa).

NADPH contacts are provided by serine 14, phenylalanine 15, arginine 35, and lysine 109. Positions 109 and 137 each coordinate sn-glycerol 3-phosphate. An NADPH-binding site is contributed by alanine 141. The sn-glycerol 3-phosphate site is built by lysine 192, aspartate 248, serine 258, arginine 259, and asparagine 260. The Proton acceptor role is filled by lysine 192. Residue arginine 259 participates in NADPH binding. Residues leucine 283 and glutamate 285 each coordinate NADPH.

This sequence belongs to the NAD-dependent glycerol-3-phosphate dehydrogenase family.

It localises to the cytoplasm. It carries out the reaction sn-glycerol 3-phosphate + NAD(+) = dihydroxyacetone phosphate + NADH + H(+). The catalysed reaction is sn-glycerol 3-phosphate + NADP(+) = dihydroxyacetone phosphate + NADPH + H(+). It functions in the pathway membrane lipid metabolism; glycerophospholipid metabolism. Catalyzes the reduction of the glycolytic intermediate dihydroxyacetone phosphate (DHAP) to sn-glycerol 3-phosphate (G3P), the key precursor for phospholipid synthesis. This chain is Glycerol-3-phosphate dehydrogenase [NAD(P)+], found in Rickettsia akari (strain Hartford).